We begin with the raw amino-acid sequence, 75 residues long: Large ribosomal subunit protein uL29 (75 aa).

It belongs to the universal ribosomal protein uL29 family.

The sequence is that of Large ribosomal subunit protein uL29 from Nostoc punctiforme (strain ATCC 29133 / PCC 73102).